The chain runs to 731 residues: MRIGNLNVEIEFIADNIVRVLYYYGREAIVDNSLVVLPNLEKLSIKGESTGPSIISFSSESLSVDINTSNGELIMKDNKGGIVVKEKRRDLKFNEELSTYNVEQEFELSEGERVYGLGQHAGGNGLGQSSAYKLDYSGLSTTLSQRNTDIGIPFIVSSKGYGILWDNYSLGSISLRRNKLKVWFEAGKKIDYYVIYGDSIDDVIKGYRKLTGDAPLLPKWAYGYWQSKERYKSQDEITSVVKEFRERKIPLDVIVLDWRYWGKYGWNAFKFDETDFPRPKDMVEEIHKMGAKLAISIWPTFGKETEVFKDMESKGCIILGTTAFNPFKDECRELFWSYVKGFYDLGIDAYWLDASEPETGLGLVFFSPIHDVDLEIGKGYEYLNAYPLMETKAVYEGQRRISNKRVVILTRSAFAGQQRHSAISWSGDVLGDWATLRAQIPAGLNFSISGIPYWTTDTGGFFSGNPETKAYAEIFVRWFQWSTFCPILRVHGTIFPKEPWRFPREYQEVILKYIRLRYKLLPYIYSLAWMTYSIGYTIMRPLVMDFRDDQNVYDFDEQYMFGPYILISPVTLPSIIEKEVYLPSKEYWYDFWTGEKLEGGRMMDVKVTLDTIPLFVRSGAVLPLLGKNVNNAEEYWDVIDLRVYPGKNGYFELYDDDGITYEYEKGKYYIIPITWDEDKQELTIGKKRGELEMSKKIIKIIWVEKGKGIEHTKPDVEIEYNGKETITVKRG.

Catalysis depends on residues aspartate 353 and glutamate 356. The active-site Proton donor is the aspartate 428.

This sequence belongs to the glycosyl hydrolase 31 family. As to quaternary structure, monomer.

It carries out the reaction Hydrolysis of terminal, non-reducing alpha-D-xylose residues with release of alpha-D-xylose.. Its function is as follows. Catalyzes the liberation of alpha-xylose from the non-reducing terminal glucose of xyloglucan oligosaccharides. Has high hydrolytic activity on the disaccharide isoprimeverose. Follows a retaining mechanism of substrate hydrolysis. In Saccharolobus solfataricus (strain ATCC 35092 / DSM 1617 / JCM 11322 / P2) (Sulfolobus solfataricus), this protein is Alpha-xylosidase (xylS).